A 284-amino-acid chain; its full sequence is Probable endonuclease 4 (284 aa).

Residues H66, H106, E142, D176, H179, H213, D226, H228, and E258 each coordinate Zn(2+).

Belongs to the AP endonuclease 2 family. The cofactor is Zn(2+).

It catalyses the reaction Endonucleolytic cleavage to 5'-phosphooligonucleotide end-products.. Endonuclease IV plays a role in DNA repair. It cleaves phosphodiester bonds at apurinic or apyrimidinic (AP) sites, generating a 3'-hydroxyl group and a 5'-terminal sugar phosphate. In Natranaerobius thermophilus (strain ATCC BAA-1301 / DSM 18059 / JW/NM-WN-LF), this protein is Probable endonuclease 4.